The primary structure comprises 483 residues: Rhamnulokinase (483 aa).

Residue 11–15 participates in ATP binding; the sequence is ASSGR. Substrate is bound by residues Gly79 and 234-236; that span reads HDT. The active-site Proton acceptor is the Asp235. Thr257 contacts ATP. Asn294 serves as a coordination point for substrate. Gln302 contacts ATP. Cys352 and Cys369 form a disulfide bridge. Gly401 provides a ligand contact to ATP.

This sequence belongs to the rhamnulokinase family. Requires Mg(2+) as cofactor.

It catalyses the reaction L-rhamnulose + ATP = L-rhamnulose 1-phosphate + ADP + H(+). The protein operates within carbohydrate degradation; L-rhamnose degradation; glycerone phosphate from L-rhamnose: step 2/3. In terms of biological role, involved in the catabolism of L-rhamnose (6-deoxy-L-mannose). Catalyzes the transfer of the gamma-phosphate group from ATP to the 1-hydroxyl group of L-rhamnulose to yield L-rhamnulose 1-phosphate. The polypeptide is Rhamnulokinase (Listeria innocua serovar 6a (strain ATCC BAA-680 / CLIP 11262)).